A 133-amino-acid polypeptide reads, in one-letter code: Large ribosomal subunit protein uL16c (133 aa).

It belongs to the universal ribosomal protein uL16 family. Part of the 50S ribosomal subunit.

Its subcellular location is the plastid. The protein localises to the chloroplast. The protein is Large ribosomal subunit protein uL16c of Liriodendron tulipifera (Tuliptree).